The primary structure comprises 337 residues: Anaerobic sulfite reductase subunit C (337 aa).

[4Fe-4S] cluster-binding residues include C115, C121, C153, C157, C180, C183, C186, C190, C212, C215, C218, and C222. Residue C157 coordinates siroheme. 4Fe-4S ferredoxin-type domains lie at 171–200 (AKMR…CLAL) and 203–232 (GKAV…RKPD).

Belongs to the nitrite and sulfite reductase 4Fe-4S domain family. As to quaternary structure, the anaerobic sulfite reductase seems to consist of three subunits. [4Fe-4S] cluster is required as a cofactor. It depends on siroheme as a cofactor.

It is found in the cytoplasm. The enzyme catalyses hydrogen sulfide + 3 NAD(+) + 3 H2O = sulfite + 3 NADH + 4 H(+). Its pathway is sulfur metabolism; sulfite reduction. Its function is as follows. This enzyme catalyzes the hydrogen sulfide production from sulfite. It is strictly anaerobic. It is regulated by electron acceptors rather than by cysteine. This Salmonella typhi protein is Anaerobic sulfite reductase subunit C (asrC).